Here is a 186-residue protein sequence, read N- to C-terminus: Putative 5'(3')-deoxyribonucleotidase (186 aa).

Aspartate 6 serves as the catalytic Nucleophile. Aspartate 6, aspartate 8, and aspartate 137 together coordinate Mg(2+). The active-site Proton donor is the aspartate 8.

Belongs to the 5'(3')-deoxyribonucleotidase family. Mg(2+) serves as cofactor.

In terms of biological role, dephosphorylates the 5' and 2'(3')-phosphates of deoxyribonucleotides. This Bordetella pertussis (strain Tohama I / ATCC BAA-589 / NCTC 13251) protein is Putative 5'(3')-deoxyribonucleotidase.